The chain runs to 321 residues: Protein-L-histidine N-pros-methyltransferase (321 aa).

The first 24 residues, 1-24, serve as a signal peptide directing secretion; that stretch reads MRLWLCWLGCYTLLLWALRRRMWA. N-linked (GlcNAc...) asparagine glycosylation is present at Asn-89. S-adenosyl-L-homocysteine contacts are provided by Glu-177, Asn-213, and Tyr-298.

It belongs to the METTL9 family.

It is found in the endoplasmic reticulum. The protein resides in the mitochondrion. The enzyme catalyses L-histidyl-[protein] + S-adenosyl-L-methionine = N(pros)-methyl-L-histidyl-[protein] + S-adenosyl-L-homocysteine + H(+). Protein-histidine N-methyltransferase that specifically catalyzes 1-methylhistidine (pros-methylhistidine) methylation of target proteins. Mediates methylation of proteins with a His-x-His (HxH) motif (where 'x' is preferably a small amino acid); 1-methylhistidine modification may affect the binding of zinc and other metals to its target proteins. This is Protein-L-histidine N-pros-methyltransferase from Gallus gallus (Chicken).